The chain runs to 217 residues: NADH dehydrogenase (ubiquinone) 23 kDa subunit (217 aa).

A mitochondrion-targeting transit peptide spans 1-26 (MSLTMRIFTASRNGQRLFGSHGARLL). 4Fe-4S ferredoxin-type domains lie at 109–138 (RRYP…IEAE) and 148–177 (TRYD…EGPN). Residues cysteine 118, cysteine 121, cysteine 124, cysteine 128, cysteine 157, cysteine 160, cysteine 163, and cysteine 167 each coordinate [4Fe-4S] cluster.

Belongs to the complex I 23 kDa subunit family. In terms of assembly, part of the mitochondrial membrane respiratory chain NADH dehydrogenase (Complex I). This is a component of the iron-sulfur (IP) fragment of the enzyme. It depends on [4Fe-4S] cluster as a cofactor. As to expression, expressed in muscles (at protein level).

The protein resides in the mitochondrion. It carries out the reaction a ubiquinone + NADH + 5 H(+)(in) = a ubiquinol + NAD(+) + 4 H(+)(out). Core subunit of the mitochondrial membrane respiratory chain NADH dehydrogenase (Complex I) that is believed to belong to the minimal assembly required for catalysis. Complex I functions in the transfer of electrons from NADH to the respiratory chain. The immediate electron acceptor for the enzyme is believed to be ubiquinone. The polypeptide is NADH dehydrogenase (ubiquinone) 23 kDa subunit (Drosophila melanogaster (Fruit fly)).